Consider the following 103-residue polypeptide: Glycoprotein 24B (103 aa).

Belongs to the csb family. O-glycosylated.

The protein localises to the cell surface. Functionally, cell-cell adhesion during early development. The polypeptide is Glycoprotein 24B (csbB) (Dictyostelium discoideum (Social amoeba)).